The following is a 322-amino-acid chain: TATA box-binding protein-like 2 (322 aa).

The interval 31-54 (PALSSTQDSTYLSGRAGPSRESGA) is disordered. Positions 32–42 (ALSSTQDSTYL) are enriched in polar residues.

Belongs to the TBP family.

It localises to the nucleus. Functionally, TATA box-binding transcription factor. Members of the TBP family are differentially required to regulate transcription and development during early embryogenesis. This Takifugu rubripes (Japanese pufferfish) protein is TATA box-binding protein-like 2.